The primary structure comprises 275 residues: Shikimate dehydrogenase (NADP(+)) (275 aa).

Residues 15–17 (SKS) and Thr62 contribute to the shikimate site. Catalysis depends on Lys66, which acts as the Proton acceptor. Glu78 serves as a coordination point for NADP(+). Shikimate-binding residues include Asn87 and Asp102. NADP(+)-binding positions include 128 to 132 (GAGGA), 151 to 156 (NRTAEK), and Leu218. Tyr220 is a binding site for shikimate. Position 241 (Gly241) interacts with NADP(+).

It belongs to the shikimate dehydrogenase family. In terms of assembly, homodimer.

The enzyme catalyses shikimate + NADP(+) = 3-dehydroshikimate + NADPH + H(+). It participates in metabolic intermediate biosynthesis; chorismate biosynthesis; chorismate from D-erythrose 4-phosphate and phosphoenolpyruvate: step 4/7. Involved in the biosynthesis of the chorismate, which leads to the biosynthesis of aromatic amino acids. Catalyzes the reversible NADPH linked reduction of 3-dehydroshikimate (DHSA) to yield shikimate (SA). The sequence is that of Shikimate dehydrogenase (NADP(+)) from Shouchella clausii (strain KSM-K16) (Alkalihalobacillus clausii).